The primary structure comprises 791 residues: Protein SEY1 (791 aa).

The Cytoplasmic segment spans residues 1 to 685 (MSEDGASKCQ…KRSTIKSHTH (685 aa)). The 229-residue stretch at 40–268 (GLDYHVISVF…REDYYLSGKY (229 aa)) folds into the GB1/RHD3-type G domain. 50–57 (GSQSSGKS) serves as a coordination point for GTP. Residues 686-706 (IPMWIYAIIAVLGWNEFMLVL) traverse the membrane as a helical segment. At 707–709 (RNP) the chain is on the lumenal side. A helical transmembrane segment spans residues 710-730 (LFIALMLLIVGAAYTVHRLNL). The Cytoplasmic segment spans residues 731-791 (WTPLATFASA…NETKENANES (61 aa)). The disordered stretch occupies residues 763-791 (PKNASSKPVESFEMQDLSVNETKENANES).

Belongs to the TRAFAC class dynamin-like GTPase superfamily. GB1/RHD3 GTPase family. RHD3 subfamily.

Its subcellular location is the endoplasmic reticulum membrane. Its function is as follows. Cooperates with the reticulon proteins and tubule-shaping DP1 family proteins to generate and maintain the structure of the tubular endoplasmic reticulum network. Has GTPase activity, which is required for its function in ER organization. The sequence is that of Protein SEY1 from Eremothecium gossypii (strain ATCC 10895 / CBS 109.51 / FGSC 9923 / NRRL Y-1056) (Yeast).